Reading from the N-terminus, the 254-residue chain is HTH-type transcriptional regulator GolR (254 aa).

Residues 3–58 (PFERQNKIIHLLDQNNKITVPELSRILDVSISTIRNDLSALEESGMIKKVHGGAVL) form the HTH deoR-type domain. The H-T-H motif DNA-binding region spans 20–39 (ITVPELSRILDVSISTIRND).

In terms of biological role, involved in the glycerol metabolism. Repressor of the gol operon for glycerol metabolism. The chain is HTH-type transcriptional regulator GolR from Listeria innocua serovar 6a (strain ATCC BAA-680 / CLIP 11262).